The chain runs to 122 residues: Small ribosomal subunit protein uS12c (122 aa).

It belongs to the universal ribosomal protein uS12 family. As to quaternary structure, part of the 30S ribosomal subunit.

The protein localises to the plastid. It is found in the chloroplast. In terms of biological role, with S4 and S5 plays an important role in translational accuracy. Located at the interface of the 30S and 50S subunits. In Cyanidioschyzon merolae (strain NIES-3377 / 10D) (Unicellular red alga), this protein is Small ribosomal subunit protein uS12c (rps12).